Reading from the N-terminus, the 427-residue chain is 3-phosphoshikimate 1-carboxyvinyltransferase (427 aa).

Residues Lys22, Ser23, and Arg27 each contribute to the 3-phosphoshikimate site. Lys22 provides a ligand contact to phosphoenolpyruvate. Positions 93 and 122 each coordinate phosphoenolpyruvate. 3-phosphoshikimate is bound by residues Ser167, Gln169, Asp315, and Lys342. Phosphoenolpyruvate is bound at residue Gln169. Asp315 serves as the catalytic Proton acceptor. The phosphoenolpyruvate site is built by Arg346 and Arg387.

The protein belongs to the EPSP synthase family. In terms of assembly, monomer.

It localises to the cytoplasm. It carries out the reaction 3-phosphoshikimate + phosphoenolpyruvate = 5-O-(1-carboxyvinyl)-3-phosphoshikimate + phosphate. Its pathway is metabolic intermediate biosynthesis; chorismate biosynthesis; chorismate from D-erythrose 4-phosphate and phosphoenolpyruvate: step 6/7. In terms of biological role, catalyzes the transfer of the enolpyruvyl moiety of phosphoenolpyruvate (PEP) to the 5-hydroxyl of shikimate-3-phosphate (S3P) to produce enolpyruvyl shikimate-3-phosphate and inorganic phosphate. The polypeptide is 3-phosphoshikimate 1-carboxyvinyltransferase (Thermus thermophilus (strain ATCC BAA-163 / DSM 7039 / HB27)).